A 625-amino-acid chain; its full sequence is tRNA uridine 5-carboxymethylaminomethyl modification enzyme MnmG (625 aa).

FAD is bound by residues 11–16, V123, and S178; that span reads GAGHAG. 271–285 is a binding site for NAD(+); that stretch reads GPRYCPSIETKIVTF. FAD is bound at residue Q368.

This sequence belongs to the MnmG family. Homodimer. Heterotetramer of two MnmE and two MnmG subunits. FAD serves as cofactor.

It localises to the cytoplasm. Its function is as follows. NAD-binding protein involved in the addition of a carboxymethylaminomethyl (cmnm) group at the wobble position (U34) of certain tRNAs, forming tRNA-cmnm(5)s(2)U34. The polypeptide is tRNA uridine 5-carboxymethylaminomethyl modification enzyme MnmG (Bacteroides fragilis (strain ATCC 25285 / DSM 2151 / CCUG 4856 / JCM 11019 / LMG 10263 / NCTC 9343 / Onslow / VPI 2553 / EN-2)).